Consider the following 453-residue polypeptide: GTPase Der (453 aa).

EngA-type G domains are found at residues 3–167 (PIIV…ISEK) and 187–360 (IKVA…EDSK). GTP-binding positions include 9–16 (GRTNVGKS), 57–61 (DTAGL), 119–122 (NKID), 193–200 (GRPNVGKS), 240–244 (DTAGA), and 305–308 (NKCD). One can recognise a KH-like domain in the interval 361 to 445 (RKISTSTLIR…PIQIQFKDNE (85 aa)).

Belongs to the TRAFAC class TrmE-Era-EngA-EngB-Septin-like GTPase superfamily. EngA (Der) GTPase family. As to quaternary structure, associates with the 50S ribosomal subunit.

In terms of biological role, GTPase that plays an essential role in the late steps of ribosome biogenesis. The protein is GTPase Der of Buchnera aphidicola subsp. Acyrthosiphon pisum (strain Tuc7).